We begin with the raw amino-acid sequence, 137 residues long: Large ribosomal subunit protein bL17 (137 aa).

It belongs to the bacterial ribosomal protein bL17 family. Part of the 50S ribosomal subunit. Contacts protein L32.

This is Large ribosomal subunit protein bL17 from Caulobacter vibrioides (strain ATCC 19089 / CIP 103742 / CB 15) (Caulobacter crescentus).